The primary structure comprises 467 residues: Hydroxyacid-oxoacid transhydrogenase, mitochondrial (467 aa).

K445 is modified (N6-acetyllysine). S452 bears the Phosphoserine mark.

This sequence belongs to the iron-containing alcohol dehydrogenase family. Hydroxyacid-oxoacid transhydrogenase subfamily.

Its subcellular location is the mitochondrion. The catalysed reaction is (S)-3-hydroxybutanoate + 2-oxoglutarate = (R)-2-hydroxyglutarate + acetoacetate. The enzyme catalyses 4-hydroxybutanoate + 2-oxoglutarate = (R)-2-hydroxyglutarate + succinate semialdehyde. Functionally, catalyzes the cofactor-independent reversible oxidation of gamma-hydroxybutyrate (GHB) to succinic semialdehyde (SSA) coupled to reduction of 2-ketoglutarate (2-KG) to D-2-hydroxyglutarate (D-2-HG). L-3-hydroxybutyrate (L-3-OHB) is also a substrate for HOT when using 2-KG as hydrogen acceptor, resulting in the formation of D-2-HG. In Pongo abelii (Sumatran orangutan), this protein is Hydroxyacid-oxoacid transhydrogenase, mitochondrial (ADHFE1).